The primary structure comprises 506 residues: Maturase K (506 aa).

The protein belongs to the intron maturase 2 family. MatK subfamily.

It localises to the plastid. It is found in the chloroplast. Usually encoded in the trnK tRNA gene intron. Probably assists in splicing its own and other chloroplast group II introns. In Trifolium gracilentum (Pinpoint clover), this protein is Maturase K.